An 814-amino-acid polypeptide reads, in one-letter code: Rho GTPase-activating protein 44 (814 aa).

The 236-residue stretch at 14–249 folds into the BAR domain; that stretch reads QTVGRAEKTE…IKAQQEAWVE (236 aa). A Rho-GAP domain is found at 255–445; the sequence is KPLEEHLMIS…PIIQHADWFF (191 aa). Disordered regions lie at residues 467–493, 528–769, and 784–814; these read ANYSSMPSPDMDPADRRQPEQARRPLS, RGSS…MSTD, and STLRLSPLEHARRHSATDKRDSEEESESTAL. Residues 479–489 are compositionally biased toward basic and acidic residues; sequence PADRRQPEQAR. At serine 493 the chain carries Phosphoserine. Low complexity-rich tracts occupy residues 567–581, 598–612, 622–637, 684–704, and 741–752; these read SPATPAPALSPSGAS, SPGSGQKGSPGSIQG, PQPAASPSQLPADQSP, SPYGLSYPPGYSMASGQLSPA, and SVSLSASSPQST. The interaction with BST2 stretch occupies residues 727 to 814; it reads KPRQRPTLPP…SEEESESTAL (88 aa). Over residues 790–805 the composition is skewed to basic and acidic residues; that stretch reads PLEHARRHSATDKRDS. Serine 805 is modified (phosphoserine). The PDZ-binding signature appears at 811–814; that stretch reads STAL.

Interacts with BST2 (via cytoplasmic domain). Interacts (probably via PDZ-binding motif) with SHANK3 (via PDZ domain); the interaction takes place in dendritic spines and promotes GRIA1 exocytosis. As to expression, specifically expressed in brain (at protein level). Detected in olfactory bulb, cortex, hippocampus, diencephalon and cerebellum (at protein level). Expressed in hippocampal neurons (at protein level).

It localises to the cell projection. The protein localises to the dendritic spine. It is found in the recycling endosome. Its subcellular location is the presynapse. The protein resides in the dendrite. GTPase-activating protein (GAP) that stimulates the GTPase activity of Rho-type GTPases. Thereby, controls Rho-type GTPases cycling between their active GTP-bound and inactive GDP-bound states. Acts as a GAP at least for CDC42 and RAC1. In neurons, is involved in dendritic spine formation and synaptic plasticity in a specific RAC1-GAP activity. Limits the initiation of exploratory dendritic filopodia. Recruited to actin-patches that seed filopodia, binds specifically to plasma membrane sections that are deformed inward by acto-myosin mediated contractile forces. Acts through GAP activity on RAC1 to reduce actin polymerization necessary for filopodia formation. In association with SHANK3, promotes GRIA1 exocytosis from recycling endosomes and spine morphological changes associated to long-term potentiation. This chain is Rho GTPase-activating protein 44, found in Mus musculus (Mouse).